We begin with the raw amino-acid sequence, 75 residues long: Dermaseptin-related peptide (75 aa).

The signal sequence occupies residues methionine 1–cysteine 22. Residues glutamate 23–methionine 43 constitute a propeptide that is removed on maturation. A disordered region spans residues glutamate 24–arginine 44. Over residues glutamate 30 to glutamine 40 the composition is skewed to acidic residues. Position 72 is a glutamine amide (glutamine 72). A propeptide spanning residues glutamate 74–glutamine 75 is cleaved from the precursor.

Expressed by the skin glands.

The protein resides in the secreted. Functionally, has antibacterial activity against Gram-positive bacterium M.luteus NCT C2665 but not against Gram-negative bacterium E.coli K12D31. This is Dermaseptin-related peptide from Agalychnis callidryas (Red-eyed tree frog).